Here is a 302-residue protein sequence, read N- to C-terminus: Cyclin-C (302 aa).

The Cyclin N-terminal domain occupies Asn46–Glu152. Positions Leu281–Leu302 are disordered. The segment covering Gln292–Leu302 has biased composition (low complexity).

The protein belongs to the cyclin family. Cyclin C subfamily. As to quaternary structure, component of the Mediator complex.

It is found in the nucleus. Its function is as follows. Component of the Mediator complex, a coactivator involved in regulated gene transcription of nearly all RNA polymerase II-dependent genes. Mediator functions as a bridge to convey information from gene-specific regulatory proteins to the basal RNA polymerase II transcription machinery. Mediator is recruited to promoters by direct interactions with regulatory proteins and serves as a scaffold for the assembly of a functional preinitiation complex with RNA polymerase II and the general transcription factors. Binds to and activates cyclin-dependent kinase cdk-8 that phosphorylates the CTD (C-terminal domain) of the large subunit of RNA polymerase II (RNAp II), which may inhibit the formation of a transcription initiation complex. The sequence is that of Cyclin-C (cic-1) from Caenorhabditis elegans.